The sequence spans 296 residues: MNHVGRKCSMSAIVGATNAGKSTLVNVLVGQKVAAVTPKVQTTRVRMHAVSNHENVQLIFIDTPGIFSPKTKLEKFLVKHAWMSLKGIENVIVLVDVKNYLNQHLKKIIDRIKHSNLNAILVLNKIDIVHQSIVSEVIEYMYSLYKFSKAFTISALYGIGIDKLVDYLCETSPYGPWLYNDDQISDAPLKFFMAEITREKLFITLRHELPYSLSVVTELVEEKEDNSLIIKQVIYVTKGSHKTIILGKKGEMVKKISMESKSDLENILQVKVHLFLFVKVREFWQNHLNECVGYAE.

The 168-residue stretch at 7-174 folds into the Era-type G domain; the sequence is KCSMSAIVGA…VDYLCETSPY (168 aa). Residues 15–22 are G1; the sequence is GATNAGKS. Residue 15 to 22 participates in GTP binding; that stretch reads GATNAGKS. Residues 41 to 45 form a G2 region; that stretch reads QTTRV. Positions 62–65 are G3; it reads DTPG. GTP contacts are provided by residues 62-66 and 124-127; these read DTPGI and NKID. The tract at residues 124 to 127 is G4; it reads NKID. The tract at residues 153–155 is G5; the sequence is ISA. A KH type-2 domain is found at 205-282; that stretch reads LRHELPYSLS…HLFLFVKVRE (78 aa).

The protein belongs to the TRAFAC class TrmE-Era-EngA-EngB-Septin-like GTPase superfamily. Era GTPase family. As to quaternary structure, monomer.

It localises to the cytoplasm. The protein localises to the cell inner membrane. Its function is as follows. An essential GTPase that binds both GDP and GTP, with rapid nucleotide exchange. Plays a role in 16S rRNA processing and 30S ribosomal subunit biogenesis and possibly also in cell cycle regulation and energy metabolism. This is GTPase Era from Ehrlichia ruminantium (strain Welgevonden).